The primary structure comprises 331 residues: Taste receptor type 2 member 38 (331 aa).

Residues 1–17 (MLTLTPVLTVSYEAKIS) lie on the Extracellular side of the membrane. Residues 18–38 (FLFLSVVEFAVGIMANAFIVL) form a helical membrane-spanning segment. Residues 39–54 (VNFWDMVKKQPLNNCD) are Cytoplasmic-facing. A helical transmembrane segment spans residues 55-75 (IALLCLSITRLFLQGLLLLDA). At 76–94 (IQLACFQQMKDPLSHNYQA) the chain is on the extracellular side. A helical transmembrane segment spans residues 95–115 (ILTLWMSANQVSLWLAACLSL). The Cytoplasmic portion of the chain corresponds to 116–142 (LYCAKIVRFSHTFPLHLASWVSRRFLQ). A helical membrane pass occupies residues 143 to 163 (MLLVALLFSGVCTALCLWDFF). Topologically, residues 164–198 (SRSHTVVTSMLHMNNTEFNLQIEKLNFFYSFVFCN) are extracellular. The N-linked (GlcNAc...) asparagine glycan is linked to Asn177. The chain crosses the membrane as a helical span at residues 199–219 (VGSVPPSLVFLISSGVLVISL). The Cytoplasmic segment spans residues 220–243 (GNHMRTMKSQTRGSRDPSLEAHVR). The helical transmembrane segment at 244–264 (AIIFLVSFLCFYVVSFCAALI) threads the bilayer. At 265-276 (SIPLLVLWHNKG) the chain is on the extracellular side. Residues 277-297 (GVMVCIGMMAACPSGHAAILI) form a helical membrane-spanning segment. At 298–331 (SGNAKLKKVIVTILFWFQSRQKVRRVHKVLPRIL) the chain is on the cytoplasmic side.

It belongs to the G-protein coupled receptor T2R family. As to expression, expressed in tongue, stomach and duodenum.

It is found in the membrane. Functionally, putative taste receptor which may play a role in the perception of bitterness. The polypeptide is Taste receptor type 2 member 38 (Tas2r38) (Rattus norvegicus (Rat)).